Consider the following 418-residue polypeptide: Histidine--tRNA ligase (418 aa).

Belongs to the class-II aminoacyl-tRNA synthetase family.

Its subcellular location is the cytoplasm. The enzyme catalyses tRNA(His) + L-histidine + ATP = L-histidyl-tRNA(His) + AMP + diphosphate + H(+). The sequence is that of Histidine--tRNA ligase from Methanococcus maripaludis (strain C6 / ATCC BAA-1332).